We begin with the raw amino-acid sequence, 347 residues long: Selenide, water dikinase 2 (347 aa).

Residue Sec18 is part of the active site. Sec18 is a non-standard amino acid (selenocysteine). Residues Lys21 and 48-50 (TSD) each bind ATP. Asp51 contributes to the Mg(2+) binding site. ATP-binding positions include Asp68, Asp91, and 138–140 (GHT). Asp91 contributes to the Mg(2+) binding site. Asp226 contacts Mg(2+).

It belongs to the selenophosphate synthase 1 family. Class I subfamily. Homodimer. The cofactor is Mg(2+).

The catalysed reaction is hydrogenselenide + ATP + H2O = selenophosphate + AMP + phosphate + 2 H(+). Functionally, synthesizes selenophosphate from selenide and ATP. The sequence is that of Selenide, water dikinase 2 from Peptoclostridium acidaminophilum (Eubacterium acidaminophilum).